Here is a 341-residue protein sequence, read N- to C-terminus: Anthranilate phosphoribosyltransferase (341 aa).

Residues Gly-81, 84-85 (GD), Thr-89, 91-94 (NIST), 109-117 (KHGNRKASS), and Thr-121 each bind 5-phospho-alpha-D-ribose 1-diphosphate. Residue Gly-81 coordinates anthranilate. Ser-93 lines the Mg(2+) pocket. Asn-112 is a binding site for anthranilate. Anthranilate is bound at residue Arg-167. Positions 226 and 227 each coordinate Mg(2+).

The protein belongs to the anthranilate phosphoribosyltransferase family. As to quaternary structure, homodimer. The cofactor is Mg(2+).

The catalysed reaction is N-(5-phospho-beta-D-ribosyl)anthranilate + diphosphate = 5-phospho-alpha-D-ribose 1-diphosphate + anthranilate. It functions in the pathway amino-acid biosynthesis; L-tryptophan biosynthesis; L-tryptophan from chorismate: step 2/5. Its function is as follows. Catalyzes the transfer of the phosphoribosyl group of 5-phosphorylribose-1-pyrophosphate (PRPP) to anthranilate to yield N-(5'-phosphoribosyl)-anthranilate (PRA). This chain is Anthranilate phosphoribosyltransferase, found in Parvibaculum lavamentivorans (strain DS-1 / DSM 13023 / NCIMB 13966).